The primary structure comprises 918 residues: Isoleucine--tRNA ligase (918 aa).

Residues 57–67 (PYANGHIHIGT) carry the 'HIGH' region motif. An L-isoleucyl-5'-AMP-binding site is contributed by Glu-552. A 'KMSKS' region motif is present at residues 593 to 597 (KMSKS). Lys-596 is an ATP binding site. The Zn(2+) site is built by Cys-886, Cys-889, Cys-906, and Cys-909.

Belongs to the class-I aminoacyl-tRNA synthetase family. IleS type 1 subfamily. As to quaternary structure, monomer. It depends on Zn(2+) as a cofactor.

The protein resides in the cytoplasm. The enzyme catalyses tRNA(Ile) + L-isoleucine + ATP = L-isoleucyl-tRNA(Ile) + AMP + diphosphate. Catalyzes the attachment of isoleucine to tRNA(Ile). As IleRS can inadvertently accommodate and process structurally similar amino acids such as valine, to avoid such errors it has two additional distinct tRNA(Ile)-dependent editing activities. One activity is designated as 'pretransfer' editing and involves the hydrolysis of activated Val-AMP. The other activity is designated 'posttransfer' editing and involves deacylation of mischarged Val-tRNA(Ile). The sequence is that of Isoleucine--tRNA ligase from Thermotoga neapolitana (strain ATCC 49049 / DSM 4359 / NBRC 107923 / NS-E).